Here is a 498-residue protein sequence, read N- to C-terminus: Glycerol kinase (498 aa).

Residue Thr11 coordinates ADP. ATP-binding residues include Thr11, Thr12, and Ser13. Sn-glycerol 3-phosphate is bound at residue Thr11. ADP is bound at residue Arg15. Sn-glycerol 3-phosphate-binding residues include Arg81, Glu82, Tyr133, and Asp242. Residues Arg81, Glu82, Tyr133, Asp242, and Gln243 each contribute to the glycerol site. 2 residues coordinate ADP: Thr264 and Gly307. ATP-binding residues include Thr264, Gly307, Gln311, and Gly411. Residue Gly411 participates in ADP binding.

It belongs to the FGGY kinase family.

It catalyses the reaction glycerol + ATP = sn-glycerol 3-phosphate + ADP + H(+). The protein operates within polyol metabolism; glycerol degradation via glycerol kinase pathway; sn-glycerol 3-phosphate from glycerol: step 1/1. With respect to regulation, inhibited by fructose 1,6-bisphosphate (FBP). Functionally, key enzyme in the regulation of glycerol uptake and metabolism. Catalyzes the phosphorylation of glycerol to yield sn-glycerol 3-phosphate. In Afipia carboxidovorans (strain ATCC 49405 / DSM 1227 / KCTC 32145 / OM5) (Oligotropha carboxidovorans), this protein is Glycerol kinase.